A 317-amino-acid chain; its full sequence is Aspartate carbamoyltransferase catalytic subunit (317 aa).

Carbamoyl phosphate contacts are provided by Arg-66 and Thr-67. Lys-94 contributes to the L-aspartate binding site. Residues Arg-116, His-144, and Gln-147 each contribute to the carbamoyl phosphate site. Residues Arg-177 and Arg-231 each contribute to the L-aspartate site. Gly-272 and Pro-273 together coordinate carbamoyl phosphate.

This sequence belongs to the aspartate/ornithine carbamoyltransferase superfamily. ATCase family. As to quaternary structure, heterododecamer (2C3:3R2) of six catalytic PyrB chains organized as two trimers (C3), and six regulatory PyrI chains organized as three dimers (R2).

The enzyme catalyses carbamoyl phosphate + L-aspartate = N-carbamoyl-L-aspartate + phosphate + H(+). It participates in pyrimidine metabolism; UMP biosynthesis via de novo pathway; (S)-dihydroorotate from bicarbonate: step 2/3. Catalyzes the condensation of carbamoyl phosphate and aspartate to form carbamoyl aspartate and inorganic phosphate, the committed step in the de novo pyrimidine nucleotide biosynthesis pathway. This Nitrobacter winogradskyi (strain ATCC 25391 / DSM 10237 / CIP 104748 / NCIMB 11846 / Nb-255) protein is Aspartate carbamoyltransferase catalytic subunit.